Consider the following 26-residue polypeptide: RVLEPGXEDPDVGEPAGEYEHHLLEX.

Positions 1–12 (RVLEPGXEDPDV) are enriched in acidic residues. The disordered stretch occupies residues 1-26 (RVLEPGXEDPDVGEPAGEYEHHLLEX). Glutamate 4 carries the 4-carboxyglutamate modification. Proline 5 is modified (4-hydroxyproline). At glutamate 8 the chain carries 4-carboxyglutamate. At proline 10 the chain carries 4-hydroxyproline. Glutamate 14 is modified (4-carboxyglutamate). At proline 15 the chain carries 4-hydroxyproline. Residues glutamate 18, glutamate 20, and glutamate 25 each carry the 4-carboxyglutamate modification.

Expressed by the venom duct.

The protein localises to the secreted. The sequence is that of Conotoxin reg6(gamma) from Conus regius (Crown cone).